A 208-amino-acid chain; its full sequence is Thymidylate kinase (208 aa).

9 to 16 provides a ligand contact to ATP; that stretch reads GGEGCGKS.

It belongs to the thymidylate kinase family.

It catalyses the reaction dTMP + ATP = dTDP + ADP. Its function is as follows. Phosphorylation of dTMP to form dTDP in both de novo and salvage pathways of dTTP synthesis. In Dehalococcoides mccartyi (strain ATCC BAA-2100 / JCM 16839 / KCTC 5957 / BAV1), this protein is Thymidylate kinase.